A 441-amino-acid chain; its full sequence is Chromosome partition protein MukF (441 aa).

The tract at residues Leu-208–Ile-236 is leucine-zipper.

This sequence belongs to the MukF family. Interacts, and probably forms a ternary complex, with MukE and MukB via its C-terminal region. The complex formation is stimulated by calcium or magnesium. It is required for an interaction between MukE and MukB.

The protein resides in the cytoplasm. It localises to the nucleoid. In terms of biological role, involved in chromosome condensation, segregation and cell cycle progression. May participate in facilitating chromosome segregation by condensation DNA from both sides of a centrally located replisome during cell division. Not required for mini-F plasmid partitioning. Probably acts via its interaction with MukB and MukE. Overexpression results in anucleate cells. It has a calcium binding activity. The chain is Chromosome partition protein MukF from Pectobacterium atrosepticum (strain SCRI 1043 / ATCC BAA-672) (Erwinia carotovora subsp. atroseptica).